A 144-amino-acid chain; its full sequence is Maximins 11/H1 (144 aa).

A signal peptide spans M1 to A18. A propeptide spanning residues R19–R43 is cleaved from the precursor. N70 is subject to Asparagine amide. Residues T74–R123 constitute a propeptide that is removed on maturation. The residue at position 143 (L143) is a Leucine amide.

Belongs to the bombinin family. Expressed by the skin glands.

Its subcellular location is the secreted. Maximin-11 shows antimicrobial activity against bacteria and against the fungus C.albicans. It has little hemolytic activity. Its function is as follows. Maximin-H1 shows antibacterial activity against both Gram-positive and Gram-negative bacteria. It also shows antimicrobial activity against the fungus C.albicans. Shows strong hemolytic activity. This Bombina maxima (Giant fire-bellied toad) protein is Maximins 11/H1.